Consider the following 239-residue polypeptide: 1-(5-phosphoribosyl)-5-[(5-phosphoribosylamino)methylideneamino] imidazole-4-carboxamide isomerase (239 aa).

The Proton acceptor role is filled by Asp8. Asp129 (proton donor) is an active-site residue.

This sequence belongs to the HisA/HisF family.

It localises to the cytoplasm. The catalysed reaction is 1-(5-phospho-beta-D-ribosyl)-5-[(5-phospho-beta-D-ribosylamino)methylideneamino]imidazole-4-carboxamide = 5-[(5-phospho-1-deoxy-D-ribulos-1-ylimino)methylamino]-1-(5-phospho-beta-D-ribosyl)imidazole-4-carboxamide. The protein operates within amino-acid biosynthesis; L-histidine biosynthesis; L-histidine from 5-phospho-alpha-D-ribose 1-diphosphate: step 4/9. The polypeptide is 1-(5-phosphoribosyl)-5-[(5-phosphoribosylamino)methylideneamino] imidazole-4-carboxamide isomerase (Roseobacter denitrificans (strain ATCC 33942 / OCh 114) (Erythrobacter sp. (strain OCh 114))).